A 97-amino-acid polypeptide reads, in one-letter code: YcgL domain-containing protein CPS_3517 (97 aa).

One can recognise a YcgL domain in the interval 1–85 (MLCAIYKSAR…PQEDLLKEHK (85 aa)).

The protein is YcgL domain-containing protein CPS_3517 of Colwellia psychrerythraea (strain 34H / ATCC BAA-681) (Vibrio psychroerythus).